The following is a 54-amino-acid chain: Synaptosomal-associated protein 25 (54 aa).

The protein belongs to the SNAP-25 family. In terms of assembly, part of the SNARE core complex containing SNAP25, VAMP2 and STX1A; this complex binds CPLX1. Found in a complex containing SYT1, SV2B and syntaxin-1. Found in a ternary complex with STX1A and VAMP8. Interacts with HSC70 and with SYT9, forming a complex with DNAJC5. The interaction with SYT9 is inhibited in presence of calcium. Isoform 1 and isoform 2 interact with BLOC1S6. Interacts with CENPF. Interacts with EQTN. Interacts with HGS. Interacts with KCNB1 (via N-terminus); reduces the voltage-dependent potassium channel KCNB1 activity in pancreatic beta cells. Interacts with OTOF. Interacts with RIMS1. Interacts with SNAPIN. Interacts with STXBP6. Interacts with TRIM9. Interacts with ZDHHC13 (via ANK repeats). Interacts with ZDHHC17 (via ANK repeats). Associates with the BLOC-1 complex. Interacts with PLCL1 (via C2 domain). Interacts with PRRT2; this interaction may impair the formation of the SNARE complex. Interacts with alpha-synuclein/SNCA. Interacts with PRPH2. Interacts with ROM1. Interacts with STX3. The N-terminus is blocked.

It localises to the cytoplasm. The protein resides in the perinuclear region. Its subcellular location is the cell membrane. The protein localises to the synapse. It is found in the synaptosome. It localises to the photoreceptor inner segment. Functionally, t-SNARE involved in the molecular regulation of neurotransmitter release. May play an important role in the synaptic function of specific neuronal systems. Associates with proteins involved in vesicle docking and membrane fusion. Regulates plasma membrane recycling through its interaction with CENPF. Modulates the gating characteristics of the delayed rectifier voltage-dependent potassium channel KCNB1 in pancreatic beta cells. This is Synaptosomal-associated protein 25 (SNAP25) from Oryctolagus cuniculus (Rabbit).